A 374-amino-acid polypeptide reads, in one-letter code: Zinc finger CCCH domain-containing protein 15 homolog (374 aa).

The tract at residues 1–20 is disordered; that stretch reads MPPKQQGPSKKSEQKRKEKV. Positions 10-20 are enriched in basic and acidic residues; sequence KKSEQKRKEKV. 2 consecutive C3H1-type zinc fingers follow at residues 90–117 and 166–199; these read DPKSLLCVFFKQGLCGKGAKCKFSHDLA and VCKYFLEAVENNKYGWFWECPNGGEKCQYRHCLP.

This sequence belongs to the ZC3H15/TMA46 family.

The protein is Zinc finger CCCH domain-containing protein 15 homolog of Caenorhabditis elegans.